Reading from the N-terminus, the 399-residue chain is Cell division protein FtsZ (399 aa).

GTP-binding positions include 18–22, 105–107, glutamate 136, arginine 140, and aspartate 184; these read GGGVN and GTG. The tract at residues 311–399 is disordered; that stretch reads GFDGGQPPSK…EELDVPDFLK (89 aa). Residues 388–399 show a composition bias toward acidic residues; it reads AAEELDVPDFLK.

It belongs to the FtsZ family. In terms of assembly, homodimer. Polymerizes to form a dynamic ring structure in a strictly GTP-dependent manner. Interacts directly with several other division proteins.

It localises to the cytoplasm. In terms of biological role, essential cell division protein that forms a contractile ring structure (Z ring) at the future cell division site. The regulation of the ring assembly controls the timing and the location of cell division. One of the functions of the FtsZ ring is to recruit other cell division proteins to the septum to produce a new cell wall between the dividing cells. Binds GTP and shows GTPase activity. The polypeptide is Cell division protein FtsZ (Streptomyces coelicolor (strain ATCC BAA-471 / A3(2) / M145)).